The primary structure comprises 416 residues: SVGFKAGVKEYKLTYYTPEYETKDTDILAAFRVTPQPGVPPEEAGAAVAAESSTGTWTTVWTDGLTSLDRYKGRCYHIEPVPGEEDQYIAYVAYPLDLFEEGSVTNMFTSIVGNVFGFKALRALRLEDLRIPVAYVKTFQGPPHGIQVERDKLNKYGRPLLGCTIKPKLGLSAKNYGRAVYECLRGGLDFTKDDENVNSQPFMRWRDRFLFCTEALFKAQVETGEIKGHYLNATAGTCEEMMKRAVFARELGVPIIMHDYLTGGFTANTTLAHYCRDNGLLLHIHRAMHAVIDRQKNHGMHFRVLAKGLRMSGGDHIHAGTVVGKLEGERDITLGFVDLLRDDFIEKDRSRGIYFTQDWVSLPGVIPVASGGIHVXHMPALTEIFGDDSVLQXGGGTLXXPWGNAPXAVANRVALX.

Lys5 is modified (N6,N6,N6-trimethyllysine). Residues Asn114 and Thr164 each coordinate substrate. Lys166 serves as the catalytic Proton acceptor. Lys168 lines the substrate pocket. Mg(2+) is bound by residues Lys192, Asp194, and Glu195. N6-carboxylysine is present on Lys192. His285 functions as the Proton acceptor in the catalytic mechanism. Positions 286, 318, and 370 each coordinate substrate.

It belongs to the RuBisCO large chain family. Type I subfamily. As to quaternary structure, heterohexadecamer of 8 large chains and 8 small chains; disulfide-linked. The disulfide link is formed within the large subunit homodimers. Requires Mg(2+) as cofactor. Post-translationally, the disulfide bond which can form in the large chain dimeric partners within the hexadecamer appears to be associated with oxidative stress and protein turnover.

Its subcellular location is the plastid. The protein localises to the chloroplast. It catalyses the reaction 2 (2R)-3-phosphoglycerate + 2 H(+) = D-ribulose 1,5-bisphosphate + CO2 + H2O. It carries out the reaction D-ribulose 1,5-bisphosphate + O2 = 2-phosphoglycolate + (2R)-3-phosphoglycerate + 2 H(+). In terms of biological role, ruBisCO catalyzes two reactions: the carboxylation of D-ribulose 1,5-bisphosphate, the primary event in carbon dioxide fixation, as well as the oxidative fragmentation of the pentose substrate in the photorespiration process. Both reactions occur simultaneously and in competition at the same active site. This is Ribulose bisphosphate carboxylase large chain (rbcL) from Spigelia marilandica (Woodland pinkroot).